We begin with the raw amino-acid sequence, 555 residues long: Putative protein NRT1/ PTR FAMILY 2.14 (555 aa).

Helical transmembrane passes span 62-82 (VTLINTWSALTNFAPIIGAFI), 93-113 (IVFGSIAELLGMLVLTFTSLV), 135-155 (YSQLYVLLSGLFLLSVGTGGI), 181-201 (FFSWYYTTHTIVQLVSMTLVL), 209-229 (WGIGFAIPTVLNFFALLLLFV), 234-254 (YVFVKPEGSVFSGVFKVLVAA), 319-339 (IKSIISIIPIFASSIIGFLAM), 363-383 (LIPPASITVISLLNIGIWLPF), 405-425 (LQKVGIGNIFSISTMLISGIV), 441-461 (VFWLTPQQVLMGFYQVFTIVG), 480-500 (SLLYLGLSLASYLSSAMVSIV), and 523-543 (CFYYFIAALSTLNFIFFFWCA).

This sequence belongs to the major facilitator superfamily. Proton-dependent oligopeptide transporter (POT/PTR) (TC 2.A.17) family. In terms of tissue distribution, not detected.

Its subcellular location is the membrane. This chain is Putative protein NRT1/ PTR FAMILY 2.14 (NPF2.14), found in Arabidopsis thaliana (Mouse-ear cress).